A 210-amino-acid chain; its full sequence is Claudin-4 (210 aa).

Residues Met1–Gln7 lie on the Cytoplasmic side of the membrane. The tract at residues Met1–Lys103 is interaction with EPHA2. Residues Val8–Pro28 traverse the membrane as a helical segment. The Extracellular segment spans residues Met29 to Arg81. Cys54 and Cys64 are oxidised to a cystine. Residues Ala82 to Gly102 traverse the membrane as a helical segment. Residues Lys103 to Lys116 are Cytoplasmic-facing. A helical membrane pass occupies residues Ile117–Ser137. The Extracellular segment spans residues Trp138–Met160. Residues Gly161–Leu181 form a helical membrane-spanning segment. The Cytoplasmic segment spans residues Cys182–Val210. At Tyr209 the chain carries Phosphotyrosine; by EPHA2. Residues Tyr209–Val210 form an interactions with TJP1, TJP2 and TJP3 region.

This sequence belongs to the claudin family. As to quaternary structure, can form heteropolymeric strands with other claudins. Interacts with CLDN8. Interacts with CLDN1. Directly interacts with TJP1/ZO-1, TJP2/ZO-2 and TJP3/ZO-3. Interacts with EPHA2; phosphorylates CLDN4 and may regulate tight junctions. In terms of processing, phosphorylated. Phosphorylation by EPHA2 is stimulated by EFNA1 and alters interaction with TJP1. Expressed primarily in lung and kidney. Present in both cortical and medullar collecting ducts (at protein level).

The protein localises to the cell junction. It localises to the tight junction. The protein resides in the cell membrane. The enzyme catalyses chloride(in) = chloride(out). The catalysed reaction is bromide(in) = bromide(out). It carries out the reaction iodide(out) = iodide(in). It catalyses the reaction fluoride(in) = fluoride(out). Functionally, can associate with other claudins to regulate tight junction structural and functional strand dynamics. May coassemble with CLDN8 into tight junction strands containing anion-selective channels that convey paracellular chloride permeability in renal collecting ducts. May integrate into CLDN3 strands to modulate localized tight junction barrier properties. May disrupt strand assembly of channel-forming CLDN2 and CLDN15 and inhibit cation conductance. Cannot form tight junction strands on its own. The protein is Claudin-4 of Mus musculus (Mouse).